A 300-amino-acid polypeptide reads, in one-letter code: Diphthine methyl ester synthase (300 aa).

S-adenosyl-L-methionine is bound by residues leucine 9, aspartate 85, glycine 88, 113 to 114, and leucine 164; that span reads SV. Residue serine 172 is modified to Phosphoserine. The S-adenosyl-L-methionine site is built by leucine 222 and histidine 247. The residue at position 298 (serine 298) is a Phosphoserine.

This sequence belongs to the diphthine synthase family.

Its subcellular location is the cytoplasm. The catalysed reaction is 2-[(3S)-amino-3-carboxypropyl]-L-histidyl-[translation elongation factor 2] + 4 S-adenosyl-L-methionine = diphthine methyl ester-[translation elongation factor 2] + 4 S-adenosyl-L-homocysteine + 3 H(+). It participates in protein modification; peptidyl-diphthamide biosynthesis. S-adenosyl-L-methionine-dependent methyltransferase that catalyzes four methylations of the modified target histidine residue in translation elongation factor 2 (EF-2), to form an intermediate called diphthine methyl ester. The four successive methylation reactions represent the second step of diphthamide biosynthesis. This is Diphthine methyl ester synthase (DPH5) from Saccharomyces cerevisiae (strain ATCC 204508 / S288c) (Baker's yeast).